Reading from the N-terminus, the 299-residue chain is Prohibitin-2 (299 aa).

Residue Ala-2 is modified to N-acetylalanine. The interval 19–49 is necessary for transcriptional repression; that stretch reads MGTALKLLLGAGAVAYGVRESVFTVEGGHRA. Tyr-128 is modified (phosphotyrosine). Lys-147 carries the post-translational modification N6-acetyllysine. A necessary for transcriptional repression region spans residues 150 to 174; it reads ASQLITQRAQVSLLIRRELTERAKD. A Phosphoserine modification is found at Ser-151. The stretch at 190–238 forms a coiled coil; sequence SREYTAAVEAKQVAQQEAQRAQFLVEKAKQEQRQKIVQAEGEAEAAKML. An N6-acetyllysine mark is found at Lys-200, Lys-236, Lys-250, and Lys-262.

This sequence belongs to the prohibitin family. In terms of assembly, the mitochondrial prohibitin complex consists of two subunits (PHB1 and PHB2), assembled into a membrane-associated ring-shaped supercomplex of approximately 1 mDa. Interacts with ESR1, HDAC1 and HDAC5. Interacts with ZNF703. Interacts with STOML2. Interacts with ARFGEF3. Interacts with SPHK2. Interacts with COX4I1; the interaction associates PHB2 with COX. Interacts with MAP1LC3B (membrane-bound form LC3-II); the interaction is direct and upon mitochondrial depolarization and proteasome-dependent outer membrane rupture. Interacts with IGFBP6 (via C-terminal domain). Interacts with CLPB. Interacts with CD86 (via cytoplasmic domain); the interactions increases after priming with CD40. Interacts with AFG3L2. Interacts with DNAJC19. Interacts with AKT2; this interaction may be important for myogenic differentiation. In terms of processing, phosphorylated. Tyrosine phosphorylation is indirectly stimulated by IGFBP6.

It is found in the mitochondrion inner membrane. Its subcellular location is the cytoplasm. The protein localises to the nucleus. It localises to the cell membrane. Protein with pleiotropic attributes mediated in a cell-compartment- and tissue-specific manner, which include the plasma membrane-associated cell signaling functions, mitochondrial chaperone, and transcriptional co-regulator of transcription factors and sex steroid hormones in the nucleus. Functionally, in the mitochondria, together with PHB, forms large ring complexes (prohibitin complexes) in the inner mitochondrial membrane (IMM) and functions as a chaperone protein that stabilizes mitochondrial respiratory enzymes and maintains mitochondrial integrity in the IMM, which is required for mitochondrial morphogenesis, neuronal survival, and normal lifespan. The prohibitin complex, with DNAJC19, regulates cardiolipin remodeling and the protein turnover of OMA1 in a cardiolipin-binding manner. Also regulates cytochrome-c oxidase assembly (COX) and mitochondrial respiration. Binding to sphingoid 1-phosphate (SPP) modulates its regulator activity. Has a key role of mitophagy receptor involved in targeting mitochondria for autophagic degradation. Involved in mitochondrial-mediated antiviral innate immunity, activates RIG-I-mediated signal transduction and production of IFNB1 and pro-inflammatory cytokine IL6. In terms of biological role, in the nucleus, serves as transcriptional co-regulator. Acts as a mediator of transcriptional repression by nuclear hormone receptors via recruitment of histone deacetylases. Functions as an estrogen receptor (ER)-selective coregulator that potentiates the inhibitory activities of antiestrogens and represses the activity of estrogens. Competes with NCOA1 for modulation of ER transcriptional activity. Its function is as follows. In the plasma membrane, is involved in IGFBP6-induced cell migration. Cooperates with CD86 to mediate CD86-signaling in B lymphocytes that regulates the level of IgG1 produced through the activation of distal signaling intermediates. Upon CD40 engagement, required to activate NF-kappa-B signaling pathway via phospholipase C and protein kinase C activation. The sequence is that of Prohibitin-2 from Rattus norvegicus (Rat).